Here is a 93-residue protein sequence, read N- to C-terminus: Integration host factor subunit beta (93 aa).

It belongs to the bacterial histone-like protein family. In terms of assembly, heterodimer of an alpha and a beta chain.

Functionally, this protein is one of the two subunits of integration host factor, a specific DNA-binding protein that functions in genetic recombination as well as in transcriptional and translational control. In Aliivibrio salmonicida (strain LFI1238) (Vibrio salmonicida (strain LFI1238)), this protein is Integration host factor subunit beta.